Here is a 582-residue protein sequence, read N- to C-terminus: Phosphoribosylaminoimidazole carboxylase (582 aa).

Residues 114 to 305 (KKYLAERGVA…QFENHLRAIL (192 aa)) form the ATP-grasp domain. 143–200 (AGRLGLPLMLKAKTLAYDGRGNSPLKSASSGDIQASLKFLGDRPLYAEGWAPFVKEVA) contributes to the ATP binding site.

In the C-terminal section; belongs to the AIR carboxylase family. Class I subfamily.

The catalysed reaction is 5-amino-1-(5-phospho-D-ribosyl)imidazole-4-carboxylate + H(+) = 5-amino-1-(5-phospho-beta-D-ribosyl)imidazole + CO2. Its pathway is purine metabolism; IMP biosynthesis via de novo pathway; 5-amino-1-(5-phospho-D-ribosyl)imidazole-4-carboxylate from 5-amino-1-(5-phospho-D-ribosyl)imidazole (carboxylase route): step 1/1. This Cryptococcus neoformans var. neoformans serotype D (strain JEC21 / ATCC MYA-565) (Filobasidiella neoformans) protein is Phosphoribosylaminoimidazole carboxylase (ADE2).